The sequence spans 213 residues: Heat shock protein 30C (213 aa).

The span at 61-80 shows a compositional bias: basic and acidic residues; it reads SKDTEMRRITDQNRQSRESE. Disordered regions lie at residues 61–93 and 174–213; these read SKDTEMRRITDQNRQSRESEGTSPNSGKDGKDH and ALPPAPETPIPISMDTAPRDAQELPPDAQTSNAEGDQKVD. Residues 76 to 188 form the sHSP domain; it reads SRESEGTSPN…PETPIPISMD (113 aa).

This sequence belongs to the small heat shock protein (HSP20) family.

This is Heat shock protein 30C (hsp30c) from Xenopus laevis (African clawed frog).